We begin with the raw amino-acid sequence, 445 residues long: Methionine aminopeptidase 2 (445 aa).

A disordered region spans residues 1–80 (MAAQVASGVG…TSKVQTEPPR (80 aa)). Over residues 57–71 (AKKKKKKTKKKKKGT) the composition is skewed to basic residues. A substrate-binding site is contributed by histidine 195. A divalent metal cation-binding residues include aspartate 215, aspartate 226, and histidine 295. Histidine 303 contributes to the substrate binding site. 2 residues coordinate a divalent metal cation: glutamate 331 and glutamate 426.

This sequence belongs to the peptidase M24A family. Methionine aminopeptidase eukaryotic type 2 subfamily. Requires Co(2+) as cofactor. Zn(2+) is required as a cofactor. The cofactor is Mn(2+). It depends on Fe(2+) as a cofactor.

The protein resides in the cytoplasm. The catalysed reaction is Release of N-terminal amino acids, preferentially methionine, from peptides and arylamides.. Functionally, cotranslationally removes the N-terminal methionine from nascent proteins. The N-terminal methionine is often cleaved when the second residue in the primary sequence is small and uncharged (Met-Ala-, Cys, Gly, Pro, Ser, Thr, or Val). The chain is Methionine aminopeptidase 2 from Paracoccidioides brasiliensis (strain Pb18).